We begin with the raw amino-acid sequence, 308 residues long: tRNA pseudouridine synthase B (308 aa).

Asp-47 functions as the Nucleophile in the catalytic mechanism.

Belongs to the pseudouridine synthase TruB family. Type 1 subfamily.

The enzyme catalyses uridine(55) in tRNA = pseudouridine(55) in tRNA. In terms of biological role, responsible for synthesis of pseudouridine from uracil-55 in the psi GC loop of transfer RNAs. The chain is tRNA pseudouridine synthase B from Xanthomonas axonopodis pv. citri (strain 306).